We begin with the raw amino-acid sequence, 249 residues long: Aspartate/glutamate leucyltransferase (249 aa).

This sequence belongs to the R-transferase family. Bpt subfamily.

The protein resides in the cytoplasm. The enzyme catalyses N-terminal L-glutamyl-[protein] + L-leucyl-tRNA(Leu) = N-terminal L-leucyl-L-glutamyl-[protein] + tRNA(Leu) + H(+). The catalysed reaction is N-terminal L-aspartyl-[protein] + L-leucyl-tRNA(Leu) = N-terminal L-leucyl-L-aspartyl-[protein] + tRNA(Leu) + H(+). Its function is as follows. Functions in the N-end rule pathway of protein degradation where it conjugates Leu from its aminoacyl-tRNA to the N-termini of proteins containing an N-terminal aspartate or glutamate. The polypeptide is Aspartate/glutamate leucyltransferase (Brucella abortus (strain S19)).